The primary structure comprises 111 residues: Putative gamma-glutamylcyclotransferase BH1612 (111 aa).

14–17 (YGHL) is a substrate binding site. The active-site Proton acceptor is glutamate 55.

It belongs to the gamma-glutamylcyclotransferase family.

Its function is as follows. Putative gamma-glutamylcyclotransferase. This Halalkalibacterium halodurans (strain ATCC BAA-125 / DSM 18197 / FERM 7344 / JCM 9153 / C-125) (Bacillus halodurans) protein is Putative gamma-glutamylcyclotransferase BH1612.